Consider the following 418-residue polypeptide: Tyrosine--tRNA ligase (418 aa).

Tyr34 is a binding site for L-tyrosine. Positions 39–48 match the 'HIGH' region motif; that stretch reads PTADSLHLGH. Positions 169 and 173 each coordinate L-tyrosine. The 'KMSKS' region motif lies at 229–233; sequence KFGKS. Lys232 is an ATP binding site. One can recognise an S4 RNA-binding domain in the interval 352–418; the sequence is LNLVDMLVTA…GKKKYAVLTY (67 aa).

This sequence belongs to the class-I aminoacyl-tRNA synthetase family. TyrS type 1 subfamily. As to quaternary structure, homodimer.

It is found in the cytoplasm. The catalysed reaction is tRNA(Tyr) + L-tyrosine + ATP = L-tyrosyl-tRNA(Tyr) + AMP + diphosphate + H(+). Functionally, catalyzes the attachment of tyrosine to tRNA(Tyr) in a two-step reaction: tyrosine is first activated by ATP to form Tyr-AMP and then transferred to the acceptor end of tRNA(Tyr). This chain is Tyrosine--tRNA ligase, found in Streptococcus pyogenes serotype M28 (strain MGAS6180).